The following is a 125-amino-acid chain: Fluoride-specific ion channel FluC (125 aa).

The next 4 helical transmembrane spans lie at 4–24 (PLLA…LLAV), 36–56 (GTLL…AWFA), 68–88 (LITT…LEVV), and 100–120 (VISV…GFWL). Residues Gly-75 and Thr-78 each contribute to the Na(+) site.

The protein belongs to the fluoride channel Fluc/FEX (TC 1.A.43) family.

It is found in the cell inner membrane. It catalyses the reaction fluoride(in) = fluoride(out). Its activity is regulated as follows. Na(+) is not transported, but it plays an essential structural role and its presence is essential for fluoride channel function. Functionally, fluoride-specific ion channel. Important for reducing fluoride concentration in the cell, thus reducing its toxicity. The sequence is that of Fluoride-specific ion channel FluC from Erwinia tasmaniensis (strain DSM 17950 / CFBP 7177 / CIP 109463 / NCPPB 4357 / Et1/99).